Reading from the N-terminus, the 125-residue chain is Large ribosomal subunit protein uL18 (125 aa).

Belongs to the universal ribosomal protein uL18 family. Part of the 50S ribosomal subunit; part of the 5S rRNA/L5/L18/L25 subcomplex. Contacts the 5S and 23S rRNAs.

This is one of the proteins that bind and probably mediate the attachment of the 5S RNA into the large ribosomal subunit, where it forms part of the central protuberance. The protein is Large ribosomal subunit protein uL18 of Anaplasma marginale (strain Florida).